A 1241-amino-acid chain; its full sequence is Interphotoreceptor matrix proteoglycan 2 (1241 aa).

A signal peptide spans 1-22 (MIMFPLFGKISLGILIFVLIEG). The Extracellular segment spans residues 23 to 1099 (DFPSLTAQTY…KHCEEFVSEP (1077 aa)). An N-linked (GlcNAc...) asparagine glycan is attached at Asn-154. Residues 180–223 (ELSSPVPVGDTSTLGDTTLSVPHPEVDAYEGASESSLERPEESI) form a disordered region. A compositionally biased stretch (polar residues) spans 189 to 199 (DTSTLGDTTLS). 2 O-linked (GalNAc...) threonine glycosylation sites follow: Thr-190 and Thr-192. Residues 239-353 (GEQIAEFSIH…KPTVVYTISN (115 aa)) enclose the SEA 1 domain. The hyaluronan-binding motif involved in chondroitin sulfate A-binding stretch occupies residues 259–267 (QDSSSFHHQ). N-linked (GlcNAc...) asparagine glycans are attached at residues Asn-301, Asn-320, and Asn-370. O-linked (GalNAc...) threonine glycosylation is found at Thr-544 and Thr-556. The span at 660–678 (QISKHSKYEHDDRSTHFPE) shows a compositional bias: basic and acidic residues. The segment at 660-684 (QISKHSKYEHDDRSTHFPEEEPLSG) is disordered. The SEA 2 domain maps to 897–1010 (GALVVFFSLR…YSLDVESGDE (114 aa)). N-linked (GlcNAc...) asparagine glycans are attached at residues Asn-942 and Asn-956. 2 EGF-like domains span residues 1010–1051 (EANP…RPCQ) and 1052–1093 (SLCD…KHCE). 6 disulfides stabilise this stretch: Cys-1014–Cys-1025, Cys-1019–Cys-1036, Cys-1038–Cys-1050, Cys-1054–Cys-1067, Cys-1061–Cys-1077, and Cys-1079–Cys-1092. The segment at 1080–1088 (RVGENWWYR) is hyaluronan-binding motif involved in chondroitin sulfate C-binding. A helical transmembrane segment spans residues 1100-1120 (VIIGITIASVVGLLVIFSAII). At 1121–1241 (YFFIRTLQAH…FVREQQVEEV (121 aa)) the chain is on the cytoplasmic side. The interval 1125 to 1133 (RTLQAHHDR) is hyaluronan-binding motif involved in chondroitin sulfate A- and C-binding. Residues 1136-1145 (RESPFSGSSR) form a hyaluronan-binding motif involved in chondroitin sulfate C-binding region. The interval 1210 to 1218 (REEIQERMR) is hyaluronan-binding motif involved in chondroitin sulfate A- and C-binding motif.

Post-translationally, highly glycosylated (N- and O-linked carbohydrates). In terms of tissue distribution, expressed in the retina (at protein level). Expressed by photoreceptors of the interphotoreceptor matrix (IPM) surrounding both rods and cones (at protein level). IPM occupies the subretinal space between the apices of the retinal pigment epithelium and the neural retina. Expressed in the pineal gland (at protein level).

The protein localises to the photoreceptor outer segment membrane. The protein resides in the photoreceptor inner segment membrane. It is found in the secreted. It localises to the extracellular space. Its subcellular location is the extracellular matrix. The protein localises to the interphotoreceptor matrix. Its function is as follows. Chondroitin sulfate- and hyaluronan-binding proteoglycan involved in the organization of interphotoreceptor matrix; may participate in the maturation and maintenance of the light-sensitive photoreceptor outer segment. Binds heparin. In Homo sapiens (Human), this protein is Interphotoreceptor matrix proteoglycan 2 (IMPG2).